Consider the following 92-residue polypeptide: Small ribosomal subunit protein uS19 (92 aa).

It belongs to the universal ribosomal protein uS19 family.

Protein S19 forms a complex with S13 that binds strongly to the 16S ribosomal RNA. This Francisella philomiragia subsp. philomiragia (strain ATCC 25017 / CCUG 19701 / FSC 153 / O#319-036) protein is Small ribosomal subunit protein uS19.